Consider the following 220-residue polypeptide: Deoxyribose-phosphate aldolase (220 aa).

Aspartate 89 serves as the catalytic Proton donor/acceptor. The active-site Schiff-base intermediate with acetaldehyde is the lysine 151. Catalysis depends on lysine 180, which acts as the Proton donor/acceptor.

The protein belongs to the DeoC/FbaB aldolase family. DeoC type 1 subfamily.

It localises to the cytoplasm. The catalysed reaction is 2-deoxy-D-ribose 5-phosphate = D-glyceraldehyde 3-phosphate + acetaldehyde. The protein operates within carbohydrate degradation; 2-deoxy-D-ribose 1-phosphate degradation; D-glyceraldehyde 3-phosphate and acetaldehyde from 2-deoxy-alpha-D-ribose 1-phosphate: step 2/2. Its function is as follows. Catalyzes a reversible aldol reaction between acetaldehyde and D-glyceraldehyde 3-phosphate to generate 2-deoxy-D-ribose 5-phosphate. This chain is Deoxyribose-phosphate aldolase, found in Mycoplasmopsis pulmonis (strain UAB CTIP) (Mycoplasma pulmonis).